We begin with the raw amino-acid sequence, 362 residues long: MNIKSLLLGSAAALVAASGAQAADAIVAPEPEAVEYVRVCDAYGAGYFYIPGTETCLRVHGYVRYDVKGGDDVYTGSDRKGWDKSARFALRVSTGSETELGTLKTFTELRFNYAANNSGVDGKYGNETSSGTVMEFAYIQLGGLRVGIDESEFHTFTGYLGDVINDDVISAGSYRTGKISYTFTGGNGFSAVIALEQGGDNDGGYTGTTNYHIDGYMPDVVGGLKYAGGWGSIAGVVAYDSVIEEWAAKVRGDVNITDQFSVWLQGAYSSAATPDQNYGQWGGDWAVWGGLKYQATQKAAFNLQAAHDDWGKTAVTANVAYELVPGFTVTPEVSYTKFGGEWKNTVAEDNAWGGIVRFQRSF.

Residues 1-22 (MNIKSLLLGSAAALVAASGAQA) form the signal peptide.

Belongs to the alphaproteobacteria porin family. In terms of assembly, homotrimer.

It is found in the cell outer membrane. In terms of biological role, forms passive diffusion pores that allow small molecular weight hydrophilic materials across the outer membrane. The polypeptide is Porin Omp2b (omp2b) (Brucella canis (strain ATCC 23365 / NCTC 10854 / RM-666)).